The chain runs to 207 residues: Ribonuclease HII (207 aa).

An RNase H type-2 domain is found at 5 to 207 (PLIIGVDEAG…APVRALLRPC (203 aa)). Residues Asp11, Glu12, and Asp117 each contribute to the a divalent metal cation site.

It belongs to the RNase HII family. Mn(2+) serves as cofactor. Mg(2+) is required as a cofactor.

The protein resides in the cytoplasm. It catalyses the reaction Endonucleolytic cleavage to 5'-phosphomonoester.. Endonuclease that specifically degrades the RNA of RNA-DNA hybrids. This is Ribonuclease HII from Hyphomonas neptunium (strain ATCC 15444).